The following is an 87-amino-acid chain: Small ribosomal subunit protein uS17 (87 aa).

This sequence belongs to the universal ribosomal protein uS17 family. In terms of assembly, part of the 30S ribosomal subunit.

One of the primary rRNA binding proteins, it binds specifically to the 5'-end of 16S ribosomal RNA. This chain is Small ribosomal subunit protein uS17, found in Endomicrobium trichonymphae.